The primary structure comprises 547 residues: Chaperonin GroEL (547 aa).

ATP-binding positions include 30–33 (TLGP), lysine 51, 87–91 (DGTTT), glycine 415, 479–481 (NAA), and aspartate 495. The disordered stretch occupies residues 524-547 (APKKDEPTPPAAGGGMGGMGGMDF). A compositionally biased stretch (gly residues) spans 535–547 (AGGGMGGMGGMDF).

This sequence belongs to the chaperonin (HSP60) family. In terms of assembly, forms a cylinder of 14 subunits composed of two heptameric rings stacked back-to-back. Interacts with the co-chaperonin GroES.

The protein localises to the cytoplasm. The enzyme catalyses ATP + H2O + a folded polypeptide = ADP + phosphate + an unfolded polypeptide.. In terms of biological role, together with its co-chaperonin GroES, plays an essential role in assisting protein folding. The GroEL-GroES system forms a nano-cage that allows encapsulation of the non-native substrate proteins and provides a physical environment optimized to promote and accelerate protein folding. The protein is Chaperonin GroEL of Xylella fastidiosa (strain 9a5c).